The chain runs to 142 residues: uncharacterized protein (142 aa).

The disordered stretch occupies residues 70–94 (PKSVSNSKKKKEKAEKGLLRPTTKP). Over residues 81–94 (EKAEKGLLRPTTKP) the composition is skewed to basic and acidic residues.

This is an uncharacterized protein from Bacillus subtilis (strain 168).